Consider the following 574-residue polypeptide: MSIGLVILVAVVALLLVVGYGTAVLMRKRNEALLQNLEERKEALYNLPVNDEVEEVKNMHLIGQSQVAFREWNQKWVDLSLNSFADIENNLFEAEGYNNSFRFIKAKHAIGNIESQIDLIEEDIKMIRAALEDLKEQESKNSGRVLHALDLFEKLQTQVAENADSYGQALAEIEKQLENIQSEFSQFVTLNSSGDPVEAAEILDKAEDHILALTHIVEKVPAIVEELTVKLPDQLEDLESGHRKLLESGYHFIETDIESRFQQLHASLKRNEANISALELDNAEYENEQAQEEINALYEIFTREIEAHKVVEKLIKNLPSYLAHTKENNQQLQKEIERLSQTFLISDTETSHVKELQAELSAQEDVVLSAVEDSSETKQAYSVVQEELEAIQERLKEIEDEQISLGEALAEIEKDDANARQKVNIYANKLHTIKRYMEKRNLPGIPDSFLEIFFSTSNNIEELVKELEATRVNIESVNRWLEILGNDMEQLEEETYRIVQDATLTEQLLQYSNRYRSFDDNVQAAFNKSLYVFEHDYDYAQSLEIISKALDLVEPGVTERFVTSYEKTRENIRF.

At 1–7 (MSIGLVI) the chain is on the extracellular side. A helical membrane pass occupies residues 8–26 (LVAVVALLLVVGYGTAVLM). 5 coiled-coil regions span residues 26–47 (MRKR…LYNL), 105–189 (KAKH…QFVT), 258–346 (ESRF…FLIS), 375–415 (SETK…IEKD), and 455–494 (STSN…LEEE). Residues 27-574 (RKRNEALLQN…YEKTRENIRF (548 aa)) are Cytoplasmic-facing.

It belongs to the EzrA family.

The protein resides in the cell membrane. Functionally, negative regulator of FtsZ ring formation; modulates the frequency and position of FtsZ ring formation. Inhibits FtsZ ring formation at polar sites. Interacts either with FtsZ or with one of its binding partners to promote depolymerization. The protein is Septation ring formation regulator EzrA of Streptococcus sanguinis (strain SK36).